Here is a 229-residue protein sequence, read N- to C-terminus: Galactonate operon transcriptional repressor (229 aa).

The HTH gntR-type domain occupies 1-71 (MTLNKTDRIV…RYRGAFVAPR (71 aa)). Residues 31-50 (EAELCEEFATSRNIIREVFR) constitute a DNA-binding region (H-T-H motif). Residues aspartate 146, histidine 150, and histidine 195 each coordinate Zn(2+).

Homodimer.

With respect to regulation, D-galactonate binds DgoR and induces a conformational change in the protein, which decreases its affinity for DNA and consequently derepresses transcription of the dgoRKADT operon. In terms of biological role, involved in the regulation of D-galactonate metabolism. Represses the expression of the dgoRKADT operon by binding to two closely spaced inverted repeats in the cis-acting element, which overlap with the D-galactonate responsive dgo promoter. Employs a derepression mechanism using D-galactonate as a specific effector molecule. This chain is Galactonate operon transcriptional repressor, found in Escherichia coli (strain K12).